Consider the following 591-residue polypeptide: Glutathione S-transferase T2 (591 aa).

The 82-residue stretch at 1–82 (MKLKVYADRM…YLSSAYASVV (82 aa)) folds into the GST N-terminal domain. Glutathione-binding positions include 11-12 (SQ), 40-41 (QL), 53-54 (KV), and 66-67 (ES). Residues 89–226 (DLSKRAKIHS…EVLFRAKDRF (138 aa)) enclose the GST C-terminal domain. The tract at residues 229 to 272 (QREMATASKPGPQSKIIQFSSIGGTSDGPNLVQDTTDRKARRRK) is disordered. The span at 243–262 (KIIQFSSIGGTSDGPNLVQD) shows a compositional bias: polar residues. In terms of domain architecture, Myb-like spans 265–338 (DRKARRRKWS…HCRQRWRKIN (74 aa)).

Belongs to the GST superfamily. Theta family.

The protein resides in the peroxisome. It carries out the reaction RX + glutathione = an S-substituted glutathione + a halide anion + H(+). Functionally, may be involved in the conjugation of reduced glutathione to a wide number of exogenous and endogenous hydrophobic electrophiles and have a detoxification role against certain herbicides. This chain is Glutathione S-transferase T2 (GSTT2), found in Arabidopsis thaliana (Mouse-ear cress).